The primary structure comprises 87 residues: Small ribosomal subunit protein bS20 (87 aa).

The disordered stretch occupies residues 1 to 26; sequence MANHKSAIKRHKQSQKRAARNRAAKT.

The protein belongs to the bacterial ribosomal protein bS20 family.

Functionally, binds directly to 16S ribosomal RNA. The protein is Small ribosomal subunit protein bS20 of Nitratidesulfovibrio vulgaris (strain DSM 19637 / Miyazaki F) (Desulfovibrio vulgaris).